A 120-amino-acid chain; its full sequence is Fumarate reductase subunit D (120 aa).

3 helical membrane-spanning segments follow: residues Phe-25–Leu-45, Gly-57–Trp-77, and Ile-100–Ile-120.

Belongs to the FrdD family. Part of an enzyme complex containing four subunits: a flavoprotein (FrdA), an iron-sulfur protein (FrdB), and two hydrophobic anchor proteins (FrdC and FrdD).

It localises to the cell inner membrane. Its function is as follows. Anchors the catalytic components of the fumarate reductase complex to the cell membrane, binds quinones. The chain is Fumarate reductase subunit D from Photobacterium profundum (strain SS9).